Consider the following 215-residue polypeptide: 23.2 kDa heat shock protein (215 aa).

The first 27 residues, 1-27 (MASMRTAAAAAMLACIAVVLASTAADG), serve as a signal peptide directing secretion. The region spanning 69–189 (DVAMLSMARV…GPRVVGIASA (121 aa)) is the sHSP domain. Positions 183–215 (VVGIASAGGDDGGKKSIGGAGEGQNQQAKKVEL) are disordered. The segment covering 205–215 (GQNQQAKKVEL) has biased composition (polar residues).

Belongs to the small heat shock protein (HSP20) family. As to quaternary structure, may form oligomeric structures.

It localises to the endoplasmic reticulum. The chain is 23.2 kDa heat shock protein (HSP23.2) from Oryza sativa subsp. japonica (Rice).